A 455-amino-acid chain; its full sequence is Chromosomal replication initiator protein DnaA (455 aa).

Residues 1–74 (MFDIEKFWQH…IQSAYGYAGI (74 aa)) are domain I, interacts with DnaA modulators. The segment at 74–117 (IEILPVFQINENNDSPERIVTPEPRYAIQLQQEKRAHKQFTKNL) is domain II. The domain III, AAA+ region stretch occupies residues 118–334 (KLNEKYTFDN…GALVKVQAYA (217 aa)). Residues Gly-162, Gly-164, Lys-165, and Thr-166 each coordinate ATP. Residues 335 to 455 (TIERADINVN…VFDLKQMIEH (121 aa)) form a domain IV, binds dsDNA region.

This sequence belongs to the DnaA family. In terms of assembly, oligomerizes as a right-handed, spiral filament on DNA at oriC.

The protein resides in the cytoplasm. Functionally, plays an essential role in the initiation and regulation of chromosomal replication. ATP-DnaA binds to the origin of replication (oriC) to initiate formation of the DNA replication initiation complex once per cell cycle. Binds the DnaA box (a 9 base pair repeat at the origin) and separates the double-stranded (ds)DNA. Forms a right-handed helical filament on oriC DNA; dsDNA binds to the exterior of the filament while single-stranded (ss)DNA is stabiized in the filament's interior. The ATP-DnaA-oriC complex binds and stabilizes one strand of the AT-rich DNA unwinding element (DUE), permitting loading of DNA polymerase. After initiation quickly degrades to an ADP-DnaA complex that is not apt for DNA replication. Binds acidic phospholipids. This chain is Chromosomal replication initiator protein DnaA, found in Lactobacillus helveticus (strain DPC 4571).